A 159-amino-acid polypeptide reads, in one-letter code: 16 kDa outer membrane lipoprotein (159 aa).

A signal peptide spans 1–21; that stretch reads MNKKIFTLFLVVAASAIFAVS. A lipid anchor (N-palmitoyl cysteine) is attached at Cys-22. Cys-22 carries S-diacylglycerol cysteine lipidation.

Its subcellular location is the cell outer membrane. The polypeptide is 16 kDa outer membrane lipoprotein (smpA) (Brachyspira hyodysenteriae (Treponema hyodysenteriae)).